The following is a 460-amino-acid chain: ATP synthase subunit beta (460 aa).

149–156 (GGAGVGKT) lines the ATP pocket.

It belongs to the ATPase alpha/beta chains family. F-type ATPases have 2 components, CF(1) - the catalytic core - and CF(0) - the membrane proton channel. CF(1) has five subunits: alpha(3), beta(3), gamma(1), delta(1), epsilon(1). CF(0) has three main subunits: a(1), b(2) and c(9-12). The alpha and beta chains form an alternating ring which encloses part of the gamma chain. CF(1) is attached to CF(0) by a central stalk formed by the gamma and epsilon chains, while a peripheral stalk is formed by the delta and b chains.

It localises to the cell membrane. The enzyme catalyses ATP + H2O + 4 H(+)(in) = ADP + phosphate + 5 H(+)(out). Functionally, produces ATP from ADP in the presence of a proton gradient across the membrane. The catalytic sites are hosted primarily by the beta subunits. This chain is ATP synthase subunit beta, found in Acholeplasma laidlawii (strain PG-8A).